The primary structure comprises 344 residues: Mitochondrial mRNA pseudouridine synthase RPUSD3 (344 aa).

The transit peptide at 1–41 (MGGWRVLGQASGGWRRGLGIRATSTAAGFGTKARHQLQRRG) directs the protein to the mitochondrion. A disordered region spans residues 29-59 (FGTKARHQLQRRGASKPSDPPGDQPFPGLLR). Residues 32–42 (KARHQLQRRGA) show a composition bias toward basic residues. Ser64 bears the Phosphoserine mark.

The protein belongs to the pseudouridine synthase RluA family. In terms of assembly, forms a regulatory protein-RNA complex, consisting of RCC1L, NGRN, RPUSD3, RPUSD4, TRUB2, FASTKD2 and 16S mt-rRNA.

Its subcellular location is the mitochondrion matrix. The enzyme catalyses a uridine in mRNA = a pseudouridine in mRNA. In terms of biological role, catalyzes uridine to pseudouridine isomerization (pseudouridylation) of specific mitochondrial mRNAs (mt-mRNAs), a post-transcriptional modification necessary for their translation. Acts at position 390 in COXI mt-mRNA and at position 697-699 in mitochondrial COXIII mt-mRNA. As a component of a functional protein-RNA module, consisting of RCC1L, NGRN, RPUSD3, RPUSD4, TRUB2, FASTKD2 and 16S mitochondrial ribosomal RNA (16S mt-rRNA), controls 16S mt-rRNA abundance and may play a role in mitochondrial ribosome biogenesis. This is Mitochondrial mRNA pseudouridine synthase RPUSD3 (RPUSD3) from Bos taurus (Bovine).